Consider the following 357-residue polypeptide: Holliday junction branch migration complex subunit RuvB (357 aa).

Positions 4-195 are large ATPase domain (RuvB-L); that stretch reads TDKLAAKAVS…FGIVARLEFY (192 aa). ATP contacts are provided by residues Leu-34, Arg-35, Gly-76, Lys-79, Thr-80, Thr-81, 142-144, Arg-185, Tyr-195, and Arg-232; that span reads EDY. Thr-80 contributes to the Mg(2+) binding site. The tract at residues 196–266 is small ATPAse domain (RuvB-S); that stretch reads TPAELAKIVT…VADAALAMLD (71 aa). The segment at 269 to 357 is head domain (RuvB-H); that stretch reads AVGFDLMDRK…PVRDLWDDNQ (89 aa). Arg-305, Arg-324, and Arg-329 together coordinate DNA.

The protein belongs to the RuvB family. In terms of assembly, homohexamer. Forms an RuvA(8)-RuvB(12)-Holliday junction (HJ) complex. HJ DNA is sandwiched between 2 RuvA tetramers; dsDNA enters through RuvA and exits via RuvB. An RuvB hexamer assembles on each DNA strand where it exits the tetramer. Each RuvB hexamer is contacted by two RuvA subunits (via domain III) on 2 adjacent RuvB subunits; this complex drives branch migration. In the full resolvosome a probable DNA-RuvA(4)-RuvB(12)-RuvC(2) complex forms which resolves the HJ.

It localises to the cytoplasm. It carries out the reaction ATP + H2O = ADP + phosphate + H(+). In terms of biological role, the RuvA-RuvB-RuvC complex processes Holliday junction (HJ) DNA during genetic recombination and DNA repair, while the RuvA-RuvB complex plays an important role in the rescue of blocked DNA replication forks via replication fork reversal (RFR). RuvA specifically binds to HJ cruciform DNA, conferring on it an open structure. The RuvB hexamer acts as an ATP-dependent pump, pulling dsDNA into and through the RuvAB complex. RuvB forms 2 homohexamers on either side of HJ DNA bound by 1 or 2 RuvA tetramers; 4 subunits per hexamer contact DNA at a time. Coordinated motions by a converter formed by DNA-disengaged RuvB subunits stimulates ATP hydrolysis and nucleotide exchange. Immobilization of the converter enables RuvB to convert the ATP-contained energy into a lever motion, pulling 2 nucleotides of DNA out of the RuvA tetramer per ATP hydrolyzed, thus driving DNA branch migration. The RuvB motors rotate together with the DNA substrate, which together with the progressing nucleotide cycle form the mechanistic basis for DNA recombination by continuous HJ branch migration. Branch migration allows RuvC to scan DNA until it finds its consensus sequence, where it cleaves and resolves cruciform DNA. The polypeptide is Holliday junction branch migration complex subunit RuvB (Ralstonia pickettii (strain 12J)).